We begin with the raw amino-acid sequence, 632 residues long: Extracellular metalloproteinase 1 (632 aa).

An N-terminal signal peptide occupies residues 1 to 19; sequence MHGLLLAAGLLSLPLRVLA. Positions 20 to 243 are excised as a propeptide; the sequence is HPQPSTSLTS…VHNVVDYVSH (224 aa). N284 carries N-linked (GlcNAc...) asparagine glycosylation. H427 is a Zn(2+) binding site. E428 is an active-site residue. H431 contacts Zn(2+). Residues N591 and N620 are each glycosylated (N-linked (GlcNAc...) asparagine).

Belongs to the peptidase M36 family. Zn(2+) is required as a cofactor.

It is found in the secreted. In terms of biological role, secreted metalloproteinase that allows assimilation of proteinaceous substrates and probably acts as a virulence factor. In Arthroderma gypseum (strain ATCC MYA-4604 / CBS 118893) (Microsporum gypseum), this protein is Extracellular metalloproteinase 1 (MEP1).